Consider the following 496-residue polypeptide: Probable histidine ammonia-lyase (496 aa).

Residues 141–143 constitute a cross-link (5-imidazolinone (Ala-Gly)); the sequence is ASG. Residue Ser142 is modified to 2,3-didehydroalanine (Ser).

Belongs to the PAL/histidase family. Contains an active site 4-methylidene-imidazol-5-one (MIO), which is formed autocatalytically by cyclization and dehydration of residues Ala-Ser-Gly.

The protein resides in the cytoplasm. It catalyses the reaction L-histidine = trans-urocanate + NH4(+). Its pathway is amino-acid degradation; L-histidine degradation into L-glutamate; N-formimidoyl-L-glutamate from L-histidine: step 1/3. This chain is Probable histidine ammonia-lyase, found in Thermoplasma acidophilum (strain ATCC 25905 / DSM 1728 / JCM 9062 / NBRC 15155 / AMRC-C165).